The primary structure comprises 342 residues: Biotin synthase (342 aa).

Residues G38 to S262 form the Radical SAM core domain. C53, C57, and C60 together coordinate [4Fe-4S] cluster. [2Fe-2S] cluster-binding residues include C97, C128, C188, and R260.

The protein belongs to the radical SAM superfamily. Biotin synthase family. As to quaternary structure, homodimer. It depends on [4Fe-4S] cluster as a cofactor. [2Fe-2S] cluster serves as cofactor.

It catalyses the reaction (4R,5S)-dethiobiotin + (sulfur carrier)-SH + 2 reduced [2Fe-2S]-[ferredoxin] + 2 S-adenosyl-L-methionine = (sulfur carrier)-H + biotin + 2 5'-deoxyadenosine + 2 L-methionine + 2 oxidized [2Fe-2S]-[ferredoxin]. The protein operates within cofactor biosynthesis; biotin biosynthesis; biotin from 7,8-diaminononanoate: step 2/2. Its function is as follows. Catalyzes the conversion of dethiobiotin (DTB) to biotin by the insertion of a sulfur atom into dethiobiotin via a radical-based mechanism. This is Biotin synthase from Baumannia cicadellinicola subsp. Homalodisca coagulata.